We begin with the raw amino-acid sequence, 73 residues long: Conotoxin MaI51 (73 aa).

Residues 1–19 (MQKLTILLLVAAVLLSTQA) form the signal peptide. Positions 20–41 (LNQEKRPKEMINVLSKGKTNAE) are excised as a propeptide. Glutamine 46 is subject to Pyrrolidone carboxylic acid. Cystine bridges form between cysteine 47–cysteine 61, cysteine 54–cysteine 65, and cysteine 60–cysteine 69. Isoleucine 72 carries the isoleucine amide modification.

This sequence belongs to the conotoxin O2 superfamily. Expressed by the venom duct.

It localises to the secreted. This Conus marmoreus (Marble cone) protein is Conotoxin MaI51.